The chain runs to 190 residues: ADP-ribosylation factor-like protein 6 (190 aa).

G2 carries the N-myristoyl glycine lipid modification. Residues 24 to 31 (GLDNSGKT), 69 to 73 (DMAGQ), and 130 to 133 (NKMD) contribute to the GTP site.

The protein belongs to the small GTPase superfamily. Arf family. As to expression, specifically expressed in ciliated cells.

It localises to the cytoplasm. This Caenorhabditis elegans protein is ADP-ribosylation factor-like protein 6.